The sequence spans 230 residues: Interleukin-6 (230 aa).

An N-terminal signal peptide occupies residues 1 to 24 (MASKHNADLSSAAMLAALLLCALG). C96 and C106 are joined by a disulfide. N-linked (GlcNAc...) asparagine glycosylation is present at N100. Residues 206–218 (REMPKQKRRKDDG) show a composition bias toward basic and acidic residues. Residues 206 to 230 (REMPKQKRRKDDGIIPPIHPSYQMT) are disordered.

It belongs to the IL-6 superfamily. As to quaternary structure, component of a hexamer of two molecules each of IL6, IL6R and IL6ST; first binds to IL6R to associate with the signaling subunit IL6ST. In terms of tissue distribution, expressed in kidney and spleen. Low expression in liver and gills.

The protein resides in the secreted. Cytokine with a wide variety of biological functions in immunity, tissue regeneration, and metabolism. Binds to IL6R, then the complex associates to the signaling subunit IL6ST/gp130 to trigger the intracellular IL6-signaling pathway. The interaction with the membrane-bound IL6R and IL6ST stimulates 'classic signaling', whereas the binding of IL6 and soluble IL6R to IL6ST stimulates 'trans-signaling'. Alternatively, 'cluster signaling' occurs when membrane-bound IL6:IL6R complexes on transmitter cells activate IL6ST receptors on neighboring receiver cells. The polypeptide is Interleukin-6 (il6) (Paralichthys olivaceus (Bastard halibut)).